The sequence spans 782 residues: DnaJ homolog subfamily C member 16 (782 aa).

A signal peptide spans 1 to 25 (MEVRKLSISWQFLIVLVLILQILSA). The Cytoplasmic segment spans residues 26–535 (LDFDPYRVLG…DSIFHNNWRE (510 aa)). Residues 29–93 (DPYRVLGVSR…EKRSNYDQYG (65 aa)) form the J domain. Residues 119–247 (FYFDESFFHF…LRQFVESLLP (129 aa)) form the Thioredoxin domain. The helical; Anchor for type IV membrane protein transmembrane segment at 536–556 (MMPLLSLIFSALFILFGTVIV) threads the bilayer. Residues 557–782 (QAFSDSNDER…FYIPSWPELD (226 aa)) are Extracellular-facing. Positions 562-593 (SNDERESSPPEKEEAQEKTGKTEPSFTKENSS) are disordered. Residues 563–582 (NDERESSPPEKEEAQEKTGK) show a composition bias toward basic and acidic residues. The span at 583–593 (TEPSFTKENSS) shows a compositional bias: polar residues. Asparagine 631 is a glycosylation site (N-linked (GlcNAc...) asparagine).

Its subcellular location is the endoplasmic reticulum membrane. Plays an important role in regulating the size of autophagosomes during the formation process. This Homo sapiens (Human) protein is DnaJ homolog subfamily C member 16 (DNAJC16).